The chain runs to 385 residues: Tryptophan--tRNA ligase (385 aa).

A 'HIGH' region motif is present at residues 89–98 (PSSKTMHIGH). Positions 268 to 272 (KMSAS) match the 'KMSKS' region motif.

It belongs to the class-I aminoacyl-tRNA synthetase family. In terms of assembly, homodimer.

The catalysed reaction is tRNA(Trp) + L-tryptophan + ATP = L-tryptophyl-tRNA(Trp) + AMP + diphosphate + H(+). The chain is Tryptophan--tRNA ligase from Encephalitozoon cuniculi (strain GB-M1) (Microsporidian parasite).